Reading from the N-terminus, the 300-residue chain is Ribosomal protein L11 methyltransferase (300 aa).

Positions 152, 173, 195, and 234 each coordinate S-adenosyl-L-methionine.

Belongs to the methyltransferase superfamily. PrmA family.

It is found in the cytoplasm. The catalysed reaction is L-lysyl-[protein] + 3 S-adenosyl-L-methionine = N(6),N(6),N(6)-trimethyl-L-lysyl-[protein] + 3 S-adenosyl-L-homocysteine + 3 H(+). Its function is as follows. Methylates ribosomal protein L11. This Burkholderia ambifaria (strain MC40-6) protein is Ribosomal protein L11 methyltransferase.